A 320-amino-acid polypeptide reads, in one-letter code: Lipoyl synthase (320 aa).

[4Fe-4S] cluster is bound by residues Cys-67, Cys-72, Cys-78, Cys-93, Cys-97, Cys-100, and Ser-307. Residues 79–296 (FNHGTATFMI…RTKAEVMGFE (218 aa)) form the Radical SAM core domain.

Belongs to the radical SAM superfamily. Lipoyl synthase family. It depends on [4Fe-4S] cluster as a cofactor.

The protein localises to the cytoplasm. It carries out the reaction [[Fe-S] cluster scaffold protein carrying a second [4Fe-4S](2+) cluster] + N(6)-octanoyl-L-lysyl-[protein] + 2 oxidized [2Fe-2S]-[ferredoxin] + 2 S-adenosyl-L-methionine + 4 H(+) = [[Fe-S] cluster scaffold protein] + N(6)-[(R)-dihydrolipoyl]-L-lysyl-[protein] + 4 Fe(3+) + 2 hydrogen sulfide + 2 5'-deoxyadenosine + 2 L-methionine + 2 reduced [2Fe-2S]-[ferredoxin]. It functions in the pathway protein modification; protein lipoylation via endogenous pathway; protein N(6)-(lipoyl)lysine from octanoyl-[acyl-carrier-protein]: step 2/2. Catalyzes the radical-mediated insertion of two sulfur atoms into the C-6 and C-8 positions of the octanoyl moiety bound to the lipoyl domains of lipoate-dependent enzymes, thereby converting the octanoylated domains into lipoylated derivatives. This chain is Lipoyl synthase, found in Mannheimia succiniciproducens (strain KCTC 0769BP / MBEL55E).